The sequence spans 549 residues: DNA mismatch repair protein MutL (549 aa).

The protein belongs to the DNA mismatch repair MutL/HexB family.

Functionally, this protein is involved in the repair of mismatches in DNA. It is required for dam-dependent methyl-directed DNA mismatch repair. May act as a 'molecular matchmaker', a protein that promotes the formation of a stable complex between two or more DNA-binding proteins in an ATP-dependent manner without itself being part of a final effector complex. This Pseudothermotoga lettingae (strain ATCC BAA-301 / DSM 14385 / NBRC 107922 / TMO) (Thermotoga lettingae) protein is DNA mismatch repair protein MutL.